An 88-amino-acid chain; its full sequence is Cell division topological specificity factor (88 aa).

The protein belongs to the MinE family.

In terms of biological role, prevents the cell division inhibition by proteins MinC and MinD at internal division sites while permitting inhibition at polar sites. This ensures cell division at the proper site by restricting the formation of a division septum at the midpoint of the long axis of the cell. This chain is Cell division topological specificity factor, found in Pseudoalteromonas translucida (strain TAC 125).